A 360-amino-acid chain; its full sequence is Photosystem II protein D1 (360 aa).

3 helical membrane passes run 29–46, 118–133, and 142–156; these read YIGW…TATS, HFLL…EWEL, and WIFV…AASA. His-118 lines the chlorophyll a pocket. Pheophytin a is bound at residue Tyr-126. 2 residues coordinate [CaMn4O5] cluster: Asp-170 and Glu-189. Residues 197-218 form a helical membrane-spanning segment; the sequence is FHMAGVAGVFGGSLFSAMHGSL. His-198 is a chlorophyll a binding site. Residues His-215 and 264–265 each bind a quinone; that span reads SF. Fe cation is bound at residue His-215. His-272 contacts Fe cation. The chain crosses the membrane as a helical span at residues 274–288; it reads FLAAWPVVGIWLTAL. Positions 332, 333, 342, and 344 each coordinate [CaMn4O5] cluster. Positions 345 to 360 are excised as a propeptide; it reads SNEVLPVAVNAPAVNG.

This sequence belongs to the reaction center PufL/M/PsbA/D family. In terms of assembly, PSII is composed of 1 copy each of membrane proteins PsbA, PsbB, PsbC, PsbD, PsbE, PsbF, PsbH, PsbI, PsbJ, PsbK, PsbL, PsbM, PsbT, PsbX, PsbY, PsbZ, Psb30/Ycf12, at least 3 peripheral proteins of the oxygen-evolving complex and a large number of cofactors. It forms dimeric complexes. The cofactor is The D1/D2 heterodimer binds P680, chlorophylls that are the primary electron donor of PSII, and subsequent electron acceptors. It shares a non-heme iron and each subunit binds pheophytin, quinone, additional chlorophylls, carotenoids and lipids. D1 provides most of the ligands for the Mn4-Ca-O5 cluster of the oxygen-evolving complex (OEC). There is also a Cl(-1) ion associated with D1 and D2, which is required for oxygen evolution. The PSII complex binds additional chlorophylls, carotenoids and specific lipids.. Tyr-161 forms a radical intermediate that is referred to as redox-active TyrZ, YZ or Y-Z. In terms of processing, C-terminally processed by CTPA; processing is essential to allow assembly of the oxygen-evolving complex and thus photosynthetic growth.

It localises to the plastid. It is found in the chloroplast thylakoid membrane. The catalysed reaction is 2 a plastoquinone + 4 hnu + 2 H2O = 2 a plastoquinol + O2. Functionally, photosystem II (PSII) is a light-driven water:plastoquinone oxidoreductase that uses light energy to abstract electrons from H(2)O, generating O(2) and a proton gradient subsequently used for ATP formation. It consists of a core antenna complex that captures photons, and an electron transfer chain that converts photonic excitation into a charge separation. The D1/D2 (PsbA/PsbD) reaction center heterodimer binds P680, the primary electron donor of PSII as well as several subsequent electron acceptors. This chain is Photosystem II protein D1, found in Heterosigma akashiwo (Chromophytic alga).